We begin with the raw amino-acid sequence, 38 residues long: Antifungal protein 5 (38 aa).

It belongs to the plant LTP family.

In terms of biological role, possesses potent antifungal activity against F.graminearum but not P.infestans. The sequence is that of Antifungal protein 5 from Malva parviflora (Little mallow).